We begin with the raw amino-acid sequence, 626 residues long: Trehalase (626 aa).

The next 2 membrane-spanning stretches (helical) occupy residues K20–L40 and S45–S65. The alpha,alpha-trehalose site is built by R224, D232, N268, R277, Q279, R344, and E346. Residues D380 and E580 each act as proton donor/acceptor in the active site. Alpha,alpha-trehalose-binding residues include E580 and E595.

It belongs to the glycosyl hydrolase 37 family. Forms homodimers. In terms of tissue distribution, highly expressed in flowers. Expressed at low levels in leaves and stems. Expressed in guard cells.

The protein resides in the cell membrane. It is found in the cytoplasm. The protein localises to the nucleus. The enzyme catalyses alpha,alpha-trehalose + H2O = alpha-D-glucose + beta-D-glucose. Functionally, involved in the regulation of trehalose content by hydrolyzing trehalose to glucose. May play a role in the regulation of abscisic acid-induced stomatal closure in response to drought stress. The chain is Trehalase (TRE1) from Arabidopsis thaliana (Mouse-ear cress).